The following is a 123-amino-acid chain: WAP four-disulfide core domain protein 5 (123 aa).

The signal sequence occupies residues 1-24 (MRTQSLLLLGALLAVGSQLPAVFG). 2 consecutive WAP domains span residues 27–73 (KGEK…CVPR) and 74–121 (VSVK…RDPA). 8 cysteine pairs are disulfide-bonded: C34–C62, C41–C66, C49–C61, C55–C70, C81–C109, C88–C113, C96–C108, and C102–C117.

The protein resides in the secreted. In terms of biological role, putative acid-stable proteinase inhibitor. This chain is WAP four-disulfide core domain protein 5 (WFDC5), found in Pan troglodytes (Chimpanzee).